The sequence spans 159 residues: MTRAVCPGSFDPVTNGHLDIVRRAAAIFDELVVATGTNVSKSRLFDPEERLEMLREVCADLPNVTVMGFTGLIVDFCRDIDAQAIVKGLRGGNDYEYELPMAQMNAHLTGVETVFLTTHASWGYVSSSLVKEVASLGGDVSALVPPAVHGRLQARLAAG.

Ser9 contacts substrate. ATP is bound by residues 9–10 and His17; that span reads SF. Substrate contacts are provided by Lys41, Ile73, and Lys87. Residues 88–90, Glu98, and 122–128 contribute to the ATP site; these read GLR and WGYVSSS.

This sequence belongs to the bacterial CoaD family. In terms of assembly, homohexamer. Mg(2+) serves as cofactor.

It localises to the cytoplasm. It catalyses the reaction (R)-4'-phosphopantetheine + ATP + H(+) = 3'-dephospho-CoA + diphosphate. It functions in the pathway cofactor biosynthesis; coenzyme A biosynthesis; CoA from (R)-pantothenate: step 4/5. In terms of biological role, reversibly transfers an adenylyl group from ATP to 4'-phosphopantetheine, yielding dephospho-CoA (dPCoA) and pyrophosphate. The chain is Phosphopantetheine adenylyltransferase from Nocardioides sp. (strain ATCC BAA-499 / JS614).